The chain runs to 375 residues: Succinyl-diaminopimelate desuccinylase (375 aa).

H66 is a Zn(2+) binding site. The active site involves D68. D99 contacts Zn(2+). E133 acts as the Proton acceptor in catalysis. Residues E134, E162, and H348 each contribute to the Zn(2+) site.

The protein belongs to the peptidase M20A family. DapE subfamily. In terms of assembly, homodimer. Zn(2+) serves as cofactor. It depends on Co(2+) as a cofactor.

It carries out the reaction N-succinyl-(2S,6S)-2,6-diaminopimelate + H2O = (2S,6S)-2,6-diaminopimelate + succinate. The protein operates within amino-acid biosynthesis; L-lysine biosynthesis via DAP pathway; LL-2,6-diaminopimelate from (S)-tetrahydrodipicolinate (succinylase route): step 3/3. Its function is as follows. Catalyzes the hydrolysis of N-succinyl-L,L-diaminopimelic acid (SDAP), forming succinate and LL-2,6-diaminopimelate (DAP), an intermediate involved in the bacterial biosynthesis of lysine and meso-diaminopimelic acid, an essential component of bacterial cell walls. In Escherichia coli (strain SE11), this protein is Succinyl-diaminopimelate desuccinylase.